The chain runs to 372 residues: Probable inactive receptor-like protein kinase At1g65250 (372 aa).

ATP contacts are provided by residues 1 to 4 (MGWL) and K38. Positions 1-314 (MGWLRKKKKP…QERCQMKAFL (314 aa)) constitute a Protein kinase domain. Y128 and Y221 each carry phosphotyrosine. A disordered region spans residues 348–372 (SSSLSSGQTQLDSAQDISSTVVLSN). Over residues 354–372 (GQTQLDSAQDISSTVVLSN) the composition is skewed to polar residues.

It belongs to the protein kinase superfamily.

In Arabidopsis thaliana (Mouse-ear cress), this protein is Probable inactive receptor-like protein kinase At1g65250.